The chain runs to 94 residues: Co-chaperonin GroES (94 aa).

It belongs to the GroES chaperonin family. In terms of assembly, heptamer of 7 subunits arranged in a ring. Interacts with the chaperonin GroEL.

It localises to the cytoplasm. In terms of biological role, together with the chaperonin GroEL, plays an essential role in assisting protein folding. The GroEL-GroES system forms a nano-cage that allows encapsulation of the non-native substrate proteins and provides a physical environment optimized to promote and accelerate protein folding. GroES binds to the apical surface of the GroEL ring, thereby capping the opening of the GroEL channel. The chain is Co-chaperonin GroES from Enterococcus faecalis (strain ATCC 700802 / V583).